The sequence spans 663 residues: UvrABC system protein B (663 aa).

The Helicase ATP-binding domain maps to 31–188; sequence DNIEGGEKAQ…NDLVDIQFER (158 aa). Residue 44–51 coordinates ATP; the sequence is GATGTGKT. A Beta-hairpin motif is present at residues 97–120; sequence YYDYYQPEAYVPSSDTYIEKDSSV. The region spanning 435–601 is the Helicase C-terminal domain; the sequence is QMDDLLGEIN…TIKKDIRDLI (167 aa). The 36-residue stretch at 627 to 662 folds into the UVR domain; that stretch reads QEAIKKLQKQMQEAAELLDFELAAQIRDMVLELKAM.

It belongs to the UvrB family. In terms of assembly, forms a heterotetramer with UvrA during the search for lesions. Interacts with UvrC in an incision complex.

It localises to the cytoplasm. Functionally, the UvrABC repair system catalyzes the recognition and processing of DNA lesions. A damage recognition complex composed of 2 UvrA and 2 UvrB subunits scans DNA for abnormalities. Upon binding of the UvrA(2)B(2) complex to a putative damaged site, the DNA wraps around one UvrB monomer. DNA wrap is dependent on ATP binding by UvrB and probably causes local melting of the DNA helix, facilitating insertion of UvrB beta-hairpin between the DNA strands. Then UvrB probes one DNA strand for the presence of a lesion. If a lesion is found the UvrA subunits dissociate and the UvrB-DNA preincision complex is formed. This complex is subsequently bound by UvrC and the second UvrB is released. If no lesion is found, the DNA wraps around the other UvrB subunit that will check the other stand for damage. The sequence is that of UvrABC system protein B from Streptococcus mutans serotype c (strain ATCC 700610 / UA159).